A 154-amino-acid polypeptide reads, in one-letter code: DNA gyrase inhibitor (154 aa).

This sequence belongs to the DNA gyrase inhibitor family. In terms of assembly, interacts with DNA gyrase.

The protein resides in the cytoplasm. Its function is as follows. Inhibits the supercoiling activity of DNA gyrase. Acts by inhibiting DNA gyrase at an early step, prior to (or at the step of) binding of DNA by the gyrase. It protects cells against toxins that target DNA gyrase, by inhibiting activity of these toxins and reducing the formation of lethal double-strand breaks in the cell. This chain is DNA gyrase inhibitor, found in Pectobacterium carotovorum subsp. carotovorum (strain PC1).